A 636-amino-acid chain; its full sequence is 1-deoxy-D-xylulose-5-phosphate synthase (636 aa).

Residues His77 and 118–120 contribute to the thiamine diphosphate site; that span reads GHS. Asp149 is a binding site for Mg(2+). Residues 150 to 151, Asn178, Tyr290, and Glu375 each bind thiamine diphosphate; that span reads GA. Asn178 provides a ligand contact to Mg(2+).

It belongs to the transketolase family. DXPS subfamily. Homodimer. Mg(2+) is required as a cofactor. It depends on thiamine diphosphate as a cofactor.

It catalyses the reaction D-glyceraldehyde 3-phosphate + pyruvate + H(+) = 1-deoxy-D-xylulose 5-phosphate + CO2. It participates in metabolic intermediate biosynthesis; 1-deoxy-D-xylulose 5-phosphate biosynthesis; 1-deoxy-D-xylulose 5-phosphate from D-glyceraldehyde 3-phosphate and pyruvate: step 1/1. Functionally, catalyzes the acyloin condensation reaction between C atoms 2 and 3 of pyruvate and glyceraldehyde 3-phosphate to yield 1-deoxy-D-xylulose-5-phosphate (DXP). The protein is 1-deoxy-D-xylulose-5-phosphate synthase of Cytophaga hutchinsonii (strain ATCC 33406 / DSM 1761 / CIP 103989 / NBRC 15051 / NCIMB 9469 / D465).